The chain runs to 573 residues: F-box/WD repeat-containing protein 5 (573 aa).

Positions 3 to 49 constitute an F-box domain; that stretch reads EGGLPLLPDSLVYQIFLSLGPADVLAAGLVCRQWQAVSRDEFLWKEQ. One copy of the WD 1 repeat lies at 90–129; the sequence is EHTDQVLHLSFSHSGYQFASCSKDCTVKIWNNDLTISLLH. At serine 151 the chain carries Phosphoserine; by PLK4. A D-box motif is present at residues 308–316; sequence RRVFDSVLD. 2 WD repeats span residues 470 to 509 and 511 to 551; these read TPND…CLAK and RHED…RVLQ.

This sequence belongs to the FBXW5 family. Part of the SCF (SKP1-CUL1-F-box) E3 ubiquitin-protein ligase complex SCF(FBXW5) composed of CUL1, SKP1, RBX1 and FBXW5. Component of the DCX(FBXW5) E3 ubiquitin ligase complex, at least composed of (CUL4A or CUL4B), DDB1, FBXW5 and RBX1. Interacts with CDC20, TSC1, TSC2 and SASS6. Interacts with EPS8. Interacts with TNFAIP8L1; TNFAIP8L1 competes with TSC2 to bind FBXW5 increasing TSC2 stability by preventing its ubiquitination. In terms of processing, phosphorylated at Ser-151 by PLK4 during the G1/S transition, leading to inhibit its ability to ubiquitinate SASS6. Post-translationally, ubiquitinated and degraded by the APC/C complex during mitosis and G1 phase. As to expression, widely expressed in adult and embryonal tissues.

The protein localises to the cytoplasm. It participates in protein modification; protein ubiquitination. In terms of biological role, substrate recognition component of both SCF (SKP1-CUL1-F-box protein) and DCX (DDB1-CUL4-X-box) E3 ubiquitin-protein ligase complexes. Substrate-specific adapter of the DCX(FBXW5) E3 ubiquitin-protein ligase complex which mediates the polyubiquitination and subsequent degradation of TSC2. May also act as a negative regulator of MAP3K7/TAK1 signaling in the interleukin-1B (IL1B) signaling pathway. Substrate recognition component of the SCF(FBXW5) E3 ubiquitin-protein ligase complex which mediates the ubiquitination and subsequent proteasomal degradation of SASS6 during S phase, leading to prevent centriole reduplication. The SCF(FBXW5) complex also mediates ubiquitination and degradation of actin-regulator EPS8 during G2 phase, leading to the transient degradation of EPS8 and subsequent cell shape changes required to allow mitotic progression. The protein is F-box/WD repeat-containing protein 5 (Fbxw5) of Mus musculus (Mouse).